The primary structure comprises 115 residues: Ribonuclease P protein component (115 aa).

It belongs to the RnpA family. As to quaternary structure, consists of a catalytic RNA component (M1 or rnpB) and a protein subunit.

It catalyses the reaction Endonucleolytic cleavage of RNA, removing 5'-extranucleotides from tRNA precursor.. RNaseP catalyzes the removal of the 5'-leader sequence from pre-tRNA to produce the mature 5'-terminus. It can also cleave other RNA substrates such as 4.5S RNA. The protein component plays an auxiliary but essential role in vivo by binding to the 5'-leader sequence and broadening the substrate specificity of the ribozyme. This Natranaerobius thermophilus (strain ATCC BAA-1301 / DSM 18059 / JW/NM-WN-LF) protein is Ribonuclease P protein component.